A 466-amino-acid chain; its full sequence is Alpha-1A adrenergic receptor (466 aa).

At 1 to 27 (MVLLSENASEGSNCTHPPAPVNISKAI) the chain is on the extracellular side. N-linked (GlcNAc...) asparagine glycosylation is found at Asn-7, Asn-13, and Asn-22. The helical transmembrane segment at 28 to 51 (LLGVILGGLIIFGVLGNILVILSV) threads the bilayer. The Cytoplasmic segment spans residues 52-64 (ACHRHLHSVTHYY). The helical transmembrane segment at 65 to 88 (IVNLAVADLLLTSTVLPFSAIFEI) threads the bilayer. At 89-99 (LGYWAFGRVFC) the chain is on the extracellular side. A disulfide bridge connects residues Cys-99 and Cys-176. Residues 100–122 (NIWAAVDVLCCTASIMGLCIISI) traverse the membrane as a helical segment. Residues 123–143 (DRYIGVSYPLRYPTIVTQRRG) are Cytoplasmic-facing. The helical transmembrane segment at 144 to 167 (VRALLCVWVLSLVISIGPLFGWRQ) threads the bilayer. Residues 168-181 (PAPEDETICQINEE) are Extracellular-facing. The chain crosses the membrane as a helical span at residues 182 to 205 (PGYVLFSALGSFYVPLAIILVMYC). Topologically, residues 206–273 (RVYVVAKRES…FSREKKAAKT (68 aa)) are cytoplasmic. Ser-215 is modified (phosphoserine; by PKA). Residues 274 to 297 (LGIVVGCFVLCWLPFFLVMPIGSF) traverse the membrane as a helical segment. The Extracellular segment spans residues 298-305 (FPDFKPSE). Residues 306–329 (TVFKIVFWLGYLNSCINPIIYPCS) form a helical membrane-spanning segment. Topologically, residues 330 to 466 (SQEFKKAFQN…ISLGENGEEV (137 aa)) are cytoplasmic. The Nuclear localization signal motif lies at 334 to 349 (KKAFQNVLRIQCLRRR). The S-palmitoyl cysteine moiety is linked to residue Cys-345.

It belongs to the G-protein coupled receptor 1 family. Adrenergic receptor subfamily. ADRA1A sub-subfamily. Homo- and heterooligomer. Heterooligomerizes with ADRA1B homooligomers in cardiac myocytes. Interacts with CAVIN4. C-terminal Ser or Thr residues may be phosphorylated. In terms of tissue distribution, abundant in heart, brain, aorta, vena cava, vas deferens, submaxillary gland, lung, and kidney. Found at lower levels in prostate, parotid gland and skeletal muscle.

The protein resides in the nucleus membrane. It localises to the cell membrane. It is found in the cytoplasm. Its subcellular location is the membrane. The protein localises to the caveola. Functionally, this alpha-adrenergic receptor mediates its action by association with G proteins that activate a phosphatidylinositol-calcium second messenger system. Its effect is mediated by G(q) and G(11) proteins. Nuclear ADRA1A-ADRA1B heterooligomers regulate phenylephrine (PE)-stimulated ERK signaling in cardiac myocytes. This chain is Alpha-1A adrenergic receptor (Adra1a), found in Rattus norvegicus (Rat).